Consider the following 408-residue polypeptide: PCI domain-containing protein 2 (408 aa).

Ala-2 bears the N-acetylalanine mark. The residue at position 45 (Ser-45) is a Phosphoserine. Residues 210-400 (VTYRYYVGRK…QKLVVSKQNP (191 aa)) form the PCI domain.

It belongs to the CSN12 family. In terms of assembly, component of the nuclear pore complex (NPC)-associated TREX-2 complex (transcription and export complex 2), composed of at least GANP, 2 copies of ENY2, PCID2, SEM1/DSS1, and either centrin CETN2 or centrin CETN3. The TREX-2 complex also associates with ALYREF/ALY and with the nucleoporin NUP153. Interacts with BRCA2. Interacts with SRCAP chromatin remodeling complex component ZNHIT1; the interaction results in inhibition of SRCAP complex activity, preventing the deposition of histone variant H2AZ1/H2A.Z to lymphoid fate regulator genes and restricting lymphoid lineage commitment.

It is found in the cytoplasm. The protein resides in the nucleus. The protein localises to the nuclear pore complex. Functionally, required for B-cell survival through the regulation of the expression of cell-cycle checkpoint MAD2L1 protein during B cell differentiation. As a component of the TREX-2 complex, involved in the export of mRNAs to the cytoplasm through the nuclear pores. Binds and stabilizes BRCA2 and is thus involved in the control of R-loop-associated DNA damage and transcription-associated genomic instability. Blocks the activity of the SRCAP chromatin remodeling complex by interacting with SRCAP complex member ZNHIT1 and inhibiting its interaction with the complex. This prevents the deposition of histone variant H2AZ1/H2A.Z at the nucleosomes of key lymphoid fate regulator genes which suppresses their expression and restricts lymphoid lineage commitment. This Bos taurus (Bovine) protein is PCI domain-containing protein 2 (PCID2).